Consider the following 258-residue polypeptide: Imidazole glycerol phosphate synthase subunit HisF (258 aa).

Active-site residues include aspartate 11 and aspartate 130.

This sequence belongs to the HisA/HisF family. Heterodimer of HisH and HisF.

The protein resides in the cytoplasm. The enzyme catalyses 5-[(5-phospho-1-deoxy-D-ribulos-1-ylimino)methylamino]-1-(5-phospho-beta-D-ribosyl)imidazole-4-carboxamide + L-glutamine = D-erythro-1-(imidazol-4-yl)glycerol 3-phosphate + 5-amino-1-(5-phospho-beta-D-ribosyl)imidazole-4-carboxamide + L-glutamate + H(+). Its pathway is amino-acid biosynthesis; L-histidine biosynthesis; L-histidine from 5-phospho-alpha-D-ribose 1-diphosphate: step 5/9. Functionally, IGPS catalyzes the conversion of PRFAR and glutamine to IGP, AICAR and glutamate. The HisF subunit catalyzes the cyclization activity that produces IGP and AICAR from PRFAR using the ammonia provided by the HisH subunit. This chain is Imidazole glycerol phosphate synthase subunit HisF, found in Xanthomonas euvesicatoria pv. vesicatoria (strain 85-10) (Xanthomonas campestris pv. vesicatoria).